The following is a 136-amino-acid chain: Large ribosomal subunit protein uL16 (136 aa).

Belongs to the universal ribosomal protein uL16 family. Part of the 50S ribosomal subunit.

Its function is as follows. Binds 23S rRNA and is also seen to make contacts with the A and possibly P site tRNAs. The sequence is that of Large ribosomal subunit protein uL16 from Karelsulcia muelleri (strain GWSS) (Sulcia muelleri).